We begin with the raw amino-acid sequence, 292 residues long: Elongation factor Ts (292 aa).

Positions 79 to 82 (TDFV) are involved in Mg(2+) ion dislocation from EF-Tu.

This sequence belongs to the EF-Ts family.

It is found in the cytoplasm. Functionally, associates with the EF-Tu.GDP complex and induces the exchange of GDP to GTP. It remains bound to the aminoacyl-tRNA.EF-Tu.GTP complex up to the GTP hydrolysis stage on the ribosome. The polypeptide is Elongation factor Ts (Staphylococcus epidermidis (strain ATCC 12228 / FDA PCI 1200)).